Consider the following 298-residue polypeptide: Bifunctional protein FolD (298 aa).

NADP(+) contacts are provided by residues 166–168 (GRS), S195, and I236.

The protein belongs to the tetrahydrofolate dehydrogenase/cyclohydrolase family. In terms of assembly, homodimer.

The catalysed reaction is (6R)-5,10-methylene-5,6,7,8-tetrahydrofolate + NADP(+) = (6R)-5,10-methenyltetrahydrofolate + NADPH. It catalyses the reaction (6R)-5,10-methenyltetrahydrofolate + H2O = (6R)-10-formyltetrahydrofolate + H(+). Its pathway is one-carbon metabolism; tetrahydrofolate interconversion. Catalyzes the oxidation of 5,10-methylenetetrahydrofolate to 5,10-methenyltetrahydrofolate and then the hydrolysis of 5,10-methenyltetrahydrofolate to 10-formyltetrahydrofolate. The polypeptide is Bifunctional protein FolD (Chlorobium phaeobacteroides (strain BS1)).